The following is a 768-amino-acid chain: Protein STRUBBELIG (768 aa).

Positions 1-24 are cleaved as a signal peptide; that stretch reads MSFTRWEVFFGLSVLALTMPFSAG. Residues 25-341 are Extracellular-facing; sequence VTNLRDVSAI…GSGKFWSTQR (317 aa). The cysteines at positions 57 and 66 are disulfide-linked. An N-linked (GlcNAc...) asparagine glycan is attached at Asn-70. 6 LRR repeats span residues 94–115, 116–139, 140–162, 164–186, 188–210, and 211–231; these read SIQV…ALPS, SIRN…SFLS, DLSE…FQQL, KLTK…MGDL, SLKI…EDLF, and LTDL…NLLK. N-linked (GlcNAc...) asparagine glycosylation occurs at Asn-119. Residues 241–334 form a disordered region; sequence PFNTSIITPP…ISPPSGSGSG (94 aa). Asn-243 is a glycosylation site (N-linked (GlcNAc...) asparagine). Pro residues-rich tracts occupy residues 248 to 283 and 291 to 301; these read TPPP…PFAP and QHPPPSPPLVW. Residues 315–334 show a composition bias toward polar residues; the sequence is NSVSGQPTLQISPPSGSGSG. The chain crosses the membrane as a helical span at residues 342 to 362; it reads IILVVSSVAIIVLVSGLCVTL. Residues 363 to 768 are Cytoplasmic-facing; sequence WRCCRSKIYN…EIVQDLQHMI (406 aa). Residues 385 to 477 form a disordered region; sequence PYFNKPPSQP…RAAHFPPGLN (93 aa). Over residues 439–464 the composition is skewed to polar residues; the sequence is SYYNKDVNTPQKPLQQPPRQFQSNDT. The Protein kinase domain occupies 497-768; that stretch reads FSEENIIGEG…EIVQDLQHMI (272 aa). Residues 503-511 and Lys-525 contribute to the ATP site; that span reads IGEGSIGNV.

Belongs to the protein kinase superfamily. Ser/Thr protein kinase family. In terms of assembly, interacts (via intra-cellular domain) with AN; this interaction is not required for correct subcellular localization and recycling of SUB. Binds to QKY and POQ at the plasma membrane. Binds to QKY at plasmodesmata (PD) in root epidermal cells to promote tissue morphogenesis. Expressed in leaves, stems, inflorescences, flower buds and developing root epidermis.

The protein localises to the cell membrane. It is found in the cell junction. Its subcellular location is the plasmodesma. Regulated at the post-transcriptional level. Regulates the expression of transcription factors that define the cell fates. Acts in a non-cell-autonomous fashion, functions in a radial inside-out signaling process, and mediates cell morphogenesis and cell fate across clonally distinct cell layers in floral primordia, developing ovules, and root meristems. Seems to be required for the regulation of cell shape and the orientation of the mitotic division plane. Involved in root hair specification, in the formation of the outer integument and the shape of organs such as carpels and petals and is necessary for the shape and height of the stem. Non-functional SUB proteins are retained in the endoplasmic reticulum and degraded by endoplasmic reticulum-associated degradation (ERAD). Collaboratively with QKY and POQ, regulates cell growth anisotropy during gynoecium development, thus linking together cell-cell communication and cellular growth. Together with QKY, links RLK-dependent signal transduction and intercellular communication mediated by plasmodesmata (PD) to regulate tissue morphogenesis. The protein is Protein STRUBBELIG of Arabidopsis thaliana (Mouse-ear cress).